Reading from the N-terminus, the 317-residue chain is GTP cyclohydrolase MptA (317 aa).

It belongs to the GTP cyclohydrolase IV family. Homodimer. Fe(2+) is required as a cofactor.

It carries out the reaction GTP + H2O = 7,8-dihydroneopterin 2',3'-cyclic phosphate + formate + diphosphate + H(+). Its pathway is cofactor biosynthesis; 5,6,7,8-tetrahydromethanopterin biosynthesis. Converts GTP to 7,8-dihydro-D-neopterin 2',3'-cyclic phosphate, the first intermediate in the biosynthesis of coenzyme methanopterin. This Methanococcoides burtonii (strain DSM 6242 / NBRC 107633 / OCM 468 / ACE-M) protein is GTP cyclohydrolase MptA.